Here is a 189-residue protein sequence, read N- to C-terminus: Transcription factor FapR (189 aa).

Belongs to the FapR family.

Functionally, transcriptional factor involved in regulation of membrane lipid biosynthesis by repressing genes involved in fatty acid and phospholipid metabolism. In Listeria welshimeri serovar 6b (strain ATCC 35897 / DSM 20650 / CCUG 15529 / CIP 8149 / NCTC 11857 / SLCC 5334 / V8), this protein is Transcription factor FapR.